We begin with the raw amino-acid sequence, 207 residues long: Nitrophorin-1 (207 aa).

The N-terminal stretch at 1 to 23 is a signal peptide; the sequence is MKSYTALLAVAILCLFAAVGVSG. Cystine bridges form between Cys25/Cys145 and Cys64/Cys194. Position 82 (His82) interacts with heme.

The protein belongs to the calycin superfamily. Nitrophorin family. In terms of tissue distribution, salivary gland (at protein level).

The protein localises to the secreted. Heme-based protein that deliver nitric oxide gas (NO) to the victim while feeding, resulting in vasodilation and inhibition of platelet aggregation. Reversibly binds nitric oxide (NO). Also binds tightly to histamine, which is released by the host to induce wound healing. This chain is Nitrophorin-1, found in Rhodnius prolixus (Triatomid bug).